We begin with the raw amino-acid sequence, 954 residues long: ATPase 9, plasma membrane-type (954 aa).

Residues 1-66 (MAGNKDSSWD…EKKENKVLKF (66 aa)) are Cytoplasmic-facing. Residues 67–86 (LGFMWNPLSWVMELAAIMAI) traverse the membrane as a helical segment. At 87-98 (ALANGGGRPPDW) the chain is on the extracellular side. A helical transmembrane segment spans residues 99 to 119 (QDFVGITVLLIINSTISFIEE). At 120 to 248 (NNAGNAAAAL…GHFQKVLTAI (129 aa)) the chain is on the cytoplasmic side. The helical transmembrane segment at 249-269 (GNFCICSIAIGMLIEIVVMYP) threads the bilayer. The Extracellular portion of the chain corresponds to 270–278 (IQKRAYRDG). Residues 279 to 296 (IDNLLVLLIGGIPIAMPT) traverse the membrane as a helical segment. At 297–648 (VLSVTMAIGS…TSRAIFQRMK (352 aa)) the chain is on the cytoplasmic side. The 4-aspartylphosphate intermediate role is filled by Asp334. Positions 593 and 597 each coordinate Mg(2+). Residues 649-670 (NYTIYAVSITIRIVMGFMLLAL) form a helical membrane-spanning segment. Over 671-675 (IWKFD) the chain is Extracellular. A helical transmembrane segment spans residues 676–698 (FSPFMVLIVAILNDGTIMTISKD). At 699–714 (RVKPSPLPDSWKLKEI) the chain is on the cytoplasmic side. Residues 715–735 (FATGVVLGTYLAVMTVVFFWA) form a helical membrane-spanning segment. Residues 736-756 (AESTDFFSAKFGVRSISGNPH) lie on the Extracellular side of the membrane. A helical membrane pass occupies residues 757 to 777 (ELTAAVYLQVSIVSQALIFVT). The Cytoplasmic portion of the chain corresponds to 778–789 (RSRSWSYVERPG). Residues 790 to 810 (FWLISAFFMAQLIATLIAVYA) form a helical membrane-spanning segment. Residues 811–818 (NWNFARIR) lie on the Extracellular side of the membrane. A helical transmembrane segment spans residues 819 to 839 (GIGWGWAGVIWLYSIVFYIPL). Residues 840-954 (DILKFIIRYS…IEAIQQHYTL (115 aa)) are Cytoplasmic-facing. Position 886 is a phosphothreonine (Thr886). At Ser936 the chain carries Phosphoserine. An interaction with 14-3-3 proteins region spans residues 952–954 (YTL). Residue Thr953 is modified to Phosphothreonine.

This sequence belongs to the cation transport ATPase (P-type) (TC 3.A.3) family. Type IIIA subfamily. In terms of assembly, binds to 14-3-3 proteins. The binding is induced by phosphorylation of Thr-953. Binding to 14-3-3 proteins activates the H(+)-ATPase. As to expression, anther specific. Expressed in guard cells.

It is found in the membrane. The catalysed reaction is ATP + H2O + H(+)(in) = ADP + phosphate + 2 H(+)(out). The plasma membrane H(+) ATPase of plants and fungi generates a proton gradient that drives the active transport of nutrients by H(+)-symport. The resulting external acidification and/or internal alkinization may mediate growth responses. This Arabidopsis thaliana (Mouse-ear cress) protein is ATPase 9, plasma membrane-type (AHA9).